Consider the following 538-residue polypeptide: Reticuline oxidase (538 aa).

An N-terminal signal peptide occupies residues 1-23 (MENKTPIFFSLSIFLSLLNCALG). Cysteines 30 and 89 form a disulfide. N38 carries an N-linked (GlcNAc...) asparagine glycan. The FAD-binding PCMH-type domain occupies 67 to 241 (LISKPSAIIL…YAWKIKLLPV (175 aa)). Positions 104 to 166 (HSYEGLSYTS…SKLGFTAGWC (63 aa)) form a cross-link, 6-(S-cysteinyl)-8alpha-(pros-histidyl)-FAD (His-Cys). Residues N423 and N471 are each glycosylated (N-linked (GlcNAc...) asparagine).

The protein belongs to the oxygen-dependent FAD-linked oxidoreductase family. FAD serves as cofactor. A metal cation is required as a cofactor. Post-translationally, the FAD cofactor is bound via a bicovalent 6-S-cysteinyl, 8alpha-N1-histidyl FAD linkage.

The protein localises to the cytoplasmic vesicle. It catalyses the reaction (S)-reticuline + O2 = (S)-scoulerine + H2O2 + H(+). The protein operates within alkaloid biosynthesis; (S)-scoulerine biosynthesis; (S)-scoulerine from (S)-reticuline: step 1/1. Its function is as follows. Essential to the formation of benzophenanthridine alkaloids in the response of plants to pathogenic attack. Catalyzes the stereospecific conversion of the N-methyl moiety of (S)-reticuline into the berberine bridge carbon of (S)-scoulerine. In Eschscholzia californica (California poppy), this protein is Reticuline oxidase (BBE1).